Here is a 175-residue protein sequence, read N- to C-terminus: Flagellar assembly factor FliW (175 aa).

Belongs to the FliW family. As to quaternary structure, interacts with translational regulator CsrA and flagellin(s).

It is found in the cytoplasm. Functionally, acts as an anti-CsrA protein, binds CsrA and prevents it from repressing translation of its target genes, one of which is flagellin. Binds to flagellin and participates in the assembly of the flagellum. This is Flagellar assembly factor FliW from Bdellovibrio bacteriovorus (strain ATCC 15356 / DSM 50701 / NCIMB 9529 / HD100).